Consider the following 698-residue polypeptide: Protein SST2 (698 aa).

The fungal-DR stretch occupies residues 10–203 (ELSSKNFSRT…GAKPNVWSPT (194 aa)). Ser-252 is modified (phosphoserine). The 86-residue stretch at 273 to 358 (SNAGIRLFEN…SRSSFFTLSK (86 aa)) folds into the DEP domain. Phosphoserine is present on Ser-408. The RGS domain maps to 420–689 (KLDYVLTDPG…TQSDVYKDAS (270 aa)). Ser-539 carries the phosphoserine; by MAPK modification. Positions 545–586 (FPTNLYDPSPASAESAASSISSTEADTLGEPPEVSLKPSKNL) are disordered. Low complexity predominate over residues 551–570 (DPSPASAESAASSISSTEAD). A Phosphoserine modification is found at Ser-587.

In terms of processing, phosphorylated by FUS3 and KSS1.

In terms of biological role, desensitization to alpha-factor pheromone. Is involved in regulating the signaling pathway for responding to mating pheromone. In Saccharomyces cerevisiae (strain ATCC 204508 / S288c) (Baker's yeast), this protein is Protein SST2 (SST2).